Consider the following 349-residue polypeptide: Glucose 1-dehydrogenase 1 (349 aa).

Position 39 (Cys-39) interacts with Zn(2+). Thr-41 is a substrate binding site. Zn(2+) contacts are provided by His-64 and Glu-65. Substrate contacts are provided by Glu-110 and Glu-146. Residue Glu-146 coordinates Zn(2+). Residues 178–181, 260–262, and 289–291 each bind NADP(+); these read AGPI, LGV, and SVN. Asn-291 is a substrate binding site.

It belongs to the zinc-containing alcohol dehydrogenase family. Glucose 1-dehydrogenase subfamily. Zn(2+) serves as cofactor.

It carries out the reaction D-glucose + NAD(+) = D-glucono-1,5-lactone + NADH + H(+). The enzyme catalyses D-glucose + NADP(+) = D-glucono-1,5-lactone + NADPH + H(+). Functionally, catalyzes the NAD(P)(+)-dependent oxidation of D-glucose to D-gluconate via gluconolactone. Can utilize both NAD(+) and NADP(+) as electron acceptor. Is involved in the degradation of glucose through a non-phosphorylative variant of the Entner-Doudoroff pathway. This is Glucose 1-dehydrogenase 1 from Caldivirga maquilingensis (strain ATCC 700844 / DSM 13496 / JCM 10307 / IC-167).